The primary structure comprises 151 residues: Small ribosomal subunit protein uS19 (151 aa).

The protein belongs to the universal ribosomal protein uS19 family.

Protein S19 forms a complex with S13 that binds strongly to the 16S ribosomal RNA. The protein is Small ribosomal subunit protein uS19 (rps19) of Thermoplasma acidophilum (strain ATCC 25905 / DSM 1728 / JCM 9062 / NBRC 15155 / AMRC-C165).